Here is a 180-residue protein sequence, read N- to C-terminus: Putative manganese efflux pump MntP (180 aa).

The next 6 helical transmembrane spans lie at 6-26, 34-54, 67-87, 103-123, 130-150, and 159-179; these read LFALAVALGTDAFSLCIGIGI, IALISLTVLIFHILMPLLGWY, ASIAGALLLLYLGGKMIWDTI, GGLLLLSASVSMDALSVGFTL, LVLAAGVIGLVAGMMTFAGLT, and IGERAELVGGIILVGIGVKLF.

It belongs to the MntP (TC 9.B.29) family.

Its subcellular location is the cell membrane. In terms of biological role, probably functions as a manganese efflux pump. This Desulforamulus reducens (strain ATCC BAA-1160 / DSM 100696 / MI-1) (Desulfotomaculum reducens) protein is Putative manganese efflux pump MntP.